We begin with the raw amino-acid sequence, 299 residues long: ATP phosphoribosyltransferase (299 aa).

The protein belongs to the ATP phosphoribosyltransferase family. Long subfamily. Equilibrium between an active dimeric form, an inactive hexameric form and higher aggregates. Interconversion between the various forms is largely reversible and is influenced by the natural substrates and inhibitors of the enzyme. Requires Mg(2+) as cofactor.

It is found in the cytoplasm. The enzyme catalyses 1-(5-phospho-beta-D-ribosyl)-ATP + diphosphate = 5-phospho-alpha-D-ribose 1-diphosphate + ATP. The protein operates within amino-acid biosynthesis; L-histidine biosynthesis; L-histidine from 5-phospho-alpha-D-ribose 1-diphosphate: step 1/9. Its activity is regulated as follows. Feedback inhibited by histidine. Catalyzes the condensation of ATP and 5-phosphoribose 1-diphosphate to form N'-(5'-phosphoribosyl)-ATP (PR-ATP). Has a crucial role in the pathway because the rate of histidine biosynthesis seems to be controlled primarily by regulation of HisG enzymatic activity. The sequence is that of ATP phosphoribosyltransferase from Escherichia coli O81 (strain ED1a).